Reading from the N-terminus, the 916-residue chain is Protein O-GlcNAcase (916 aa).

The disordered stretch occupies residues 1 to 46 (MVQKESQAALEERESERNANPAAASGASLEQSVAPAPGEDNPSGAG). One can recognise a GH84 domain in the interval 60 to 336 (FLCGVVEGFY…TLATWYKSNM (277 aa)). Residues glycine 67, lysine 98, and aspartate 174 each contribute to the a protein site. The active-site Proton donor is aspartate 175. Residues tyrosine 219, 278-280 (WDN), aspartate 285, and asparagine 313 each bind a protein. Serine 364 carries the post-translational modification Phosphoserine. The disordered stretch occupies residues 443–465 (ALSGEPSVLTKEEEKKQPDEEPM). Basic and acidic residues predominate over residues 452–461 (TKEEEKKQPD).

Belongs to the glycosyl hydrolase 84 family. In terms of assembly, monomer. Interacts with CLOCK. Post-translationally, proteolytically cleaved by caspase-3 during apoptosis. The fragments interact with each other; cleavage does not decrease enzyme activity.

The protein localises to the cytoplasm. It localises to the nucleus. It carries out the reaction 3-O-(N-acetyl-beta-D-glucosaminyl)-L-seryl-[protein] + H2O = N-acetyl-D-glucosamine + L-seryl-[protein]. The catalysed reaction is 3-O-(N-acetyl-beta-D-glucosaminyl)-L-threonyl-[protein] + H2O = L-threonyl-[protein] + N-acetyl-D-glucosamine. In terms of biological role, cleaves GlcNAc but not GalNAc from O-glycosylated proteins. Deglycosylates a large and diverse number of proteins, such as CRYAB, ELK1, GSDMD, LMNB1 and TAB1. Can use p-nitrophenyl-beta-GlcNAc and 4-methylumbelliferone-GlcNAc as substrates but not p-nitrophenyl-beta-GalNAc or p-nitrophenyl-alpha-GlcNAc (in vitro). Does not bind acetyl-CoA and does not have histone acetyltransferase activity. The protein is Protein O-GlcNAcase of Mus musculus (Mouse).